Reading from the N-terminus, the 308-residue chain is 11-beta-hydroxysteroid dehydrogenase-like 2 (308 aa).

A helical; Signal-anchor for type II membrane protein transmembrane segment spans residues 10-30 (FLLPPLTISFLVLFYPFYLFT). NADP(+) contacts are provided by residues 53-79 (GASS…VARR) and Asp104. Ser183 is a substrate binding site. Tyr196 serves as the catalytic Proton acceptor. NADP(+)-binding positions include 196–200 (YSASK) and Lys200.

The protein belongs to the short-chain dehydrogenases/reductases (SDR) family.

Its subcellular location is the membrane. This is 11-beta-hydroxysteroid dehydrogenase-like 2 (HSD2) from Arabidopsis thaliana (Mouse-ear cress).